We begin with the raw amino-acid sequence, 131 residues long: Snaclec A8 (131 aa).

Disulfide bonds link C2/C13, C30/C129, and C104/C121. Positions 9-130 constitute a C-type lectin domain; sequence HEGHCYKVFN…CGQPYRFTCE (122 aa).

Belongs to the snaclec family. In terms of assembly, heterodimer; disulfide-linked. In terms of tissue distribution, expressed by the venom gland.

It is found in the secreted. Functionally, interferes with one step of hemostasis (modulation of platelet aggregation, or coagulation cascade, for example). The protein is Snaclec A8 of Macrovipera lebetinus (Levantine viper).